A 90-amino-acid polypeptide reads, in one-letter code: Cell division topological specificity factor (90 aa).

The segment at 1–21 (MAGFWSKLFSSEEKPSSAQTA) is disordered. Positions 10-21 (SSEEKPSSAQTA) are enriched in basic and acidic residues.

The protein belongs to the MinE family.

In terms of biological role, prevents the cell division inhibition by proteins MinC and MinD at internal division sites while permitting inhibition at polar sites. This ensures cell division at the proper site by restricting the formation of a division septum at the midpoint of the long axis of the cell. The chain is Cell division topological specificity factor from Acinetobacter baumannii (strain AB307-0294).